The chain runs to 382 residues: Queuine tRNA-ribosyltransferase (382 aa).

The active-site Proton acceptor is Asp-89. Substrate contacts are provided by residues 89–93 (DSGGF), Asp-143, Gln-187, and Gly-214. The segment at 245-251 (GVGKPED) is RNA binding. Asp-264 serves as the catalytic Nucleophile. The RNA binding; important for wobble base 34 recognition stretch occupies residues 269 to 273 (TRNAR). The Zn(2+) site is built by Cys-302, Cys-304, Cys-307, and His-333.

This sequence belongs to the queuine tRNA-ribosyltransferase family. In terms of assembly, homodimer. Within each dimer, one monomer is responsible for RNA recognition and catalysis, while the other monomer binds to the replacement base PreQ1. Zn(2+) serves as cofactor.

It carries out the reaction 7-aminomethyl-7-carbaguanine + guanosine(34) in tRNA = 7-aminomethyl-7-carbaguanosine(34) in tRNA + guanine. It participates in tRNA modification; tRNA-queuosine biosynthesis. Its function is as follows. Catalyzes the base-exchange of a guanine (G) residue with the queuine precursor 7-aminomethyl-7-deazaguanine (PreQ1) at position 34 (anticodon wobble position) in tRNAs with GU(N) anticodons (tRNA-Asp, -Asn, -His and -Tyr). Catalysis occurs through a double-displacement mechanism. The nucleophile active site attacks the C1' of nucleotide 34 to detach the guanine base from the RNA, forming a covalent enzyme-RNA intermediate. The proton acceptor active site deprotonates the incoming PreQ1, allowing a nucleophilic attack on the C1' of the ribose to form the product. After dissociation, two additional enzymatic reactions on the tRNA convert PreQ1 to queuine (Q), resulting in the hypermodified nucleoside queuosine (7-(((4,5-cis-dihydroxy-2-cyclopenten-1-yl)amino)methyl)-7-deazaguanosine). This chain is Queuine tRNA-ribosyltransferase, found in Sodalis glossinidius (strain morsitans).